Consider the following 250-residue polypeptide: Triosephosphate isomerase (250 aa).

Residue 9-11 coordinates substrate; it reads NWK. Histidine 95 functions as the Electrophile in the catalytic mechanism. Catalysis depends on glutamate 167, which acts as the Proton acceptor. Residues glycine 173, serine 212, and 233–234 contribute to the substrate site; that span reads GG.

It belongs to the triosephosphate isomerase family. As to quaternary structure, homodimer.

It localises to the cytoplasm. The catalysed reaction is D-glyceraldehyde 3-phosphate = dihydroxyacetone phosphate. Its pathway is carbohydrate biosynthesis; gluconeogenesis. It participates in carbohydrate degradation; glycolysis; D-glyceraldehyde 3-phosphate from glycerone phosphate: step 1/1. In terms of biological role, involved in the gluconeogenesis. Catalyzes stereospecifically the conversion of dihydroxyacetone phosphate (DHAP) to D-glyceraldehyde-3-phosphate (G3P). This Nitrosococcus oceani (strain ATCC 19707 / BCRC 17464 / JCM 30415 / NCIMB 11848 / C-107) protein is Triosephosphate isomerase.